Reading from the N-terminus, the 597-residue chain is Alpha-1,2-mannosyltransferase MNN2 (597 aa).

At methionine 1–lysine 12 the chain is on the cytoplasmic side. The chain crosses the membrane as a helical; Signal-anchor for type II membrane protein span at residues leucine 13–asparagine 28. Residues lysine 29 to lysine 597 are Extracellular-facing. Asparagine 34, asparagine 363, and asparagine 473 each carry an N-linked (GlcNAc...) asparagine glycan.

Belongs to the MNN1/MNT family. In terms of assembly, interacts with SVP26.

It is found in the golgi apparatus membrane. Its pathway is protein modification; protein glycosylation. Alpha-1,2-mannosyltransferase, responsible for addition of the first alpha-1,2-linked mannose to form the branches on the mannan backbone of oligosaccharides. In Saccharomyces cerevisiae (strain ATCC 204508 / S288c) (Baker's yeast), this protein is Alpha-1,2-mannosyltransferase MNN2 (MNN2).